Consider the following 657-residue polypeptide: Pyoverdine export ATP-binding/permease protein PvdT (657 aa).

The ABC transporter domain occupies 6–245 (IDLRGIRKSY…RSVNPAALQA (240 aa)). 43-50 (GASGSGKS) provides a ligand contact to ATP. The next 4 membrane-spanning stretches (helical) occupy residues 285–305 (ALTLLGIVIGVASVVVMLAVG), 539–559 (IAAISLLVGGIGVMNIMLMTV), 590–610 (LSVVGGLAGIVLALGMGAALL), and 620–640 (LPAVAGAFACALITGVIFGFM).

Belongs to the ABC transporter superfamily. Macrolide exporter (TC 3.A.1.122) family. In terms of assembly, part of the tripartite efflux system PvdRT-OpmQ, which is composed of an inner membrane component with both ATPase and permease domains, PvdT, a periplasmic membrane fusion protein, PvdR, and an outer membrane component, OpmQ.

Its subcellular location is the cell inner membrane. In terms of biological role, part of the tripartite efflux system PvdRT-OpmQ required for the secretion into the extracellular milieu of the siderophore pyoverdine (PVD), which is involved in iron acquisition. This subunit binds PVD and drives its secretion by hydrolyzing ATP. The system is responsible for export of newly synthesized PVD after the final steps of biosynthesis have taken place in the periplasm. It is also responsible for recycling of PVD after internalization of ferri-PVD into the periplasm by the outer-membrane receptor FpvA and release of iron from PVD, thus making PVD available for new cycles of iron uptake. This chain is Pyoverdine export ATP-binding/permease protein PvdT, found in Pseudomonas syringae pv. syringae (strain B728a).